The primary structure comprises 502 residues: Probable cytochrome P450 6a23 (502 aa).

Cysteine 445 contacts heme.

Belongs to the cytochrome P450 family. Requires heme as cofactor.

It is found in the endoplasmic reticulum membrane. It localises to the microsome membrane. Functionally, may be involved in the metabolism of insect hormones and in the breakdown of synthetic insecticides. The polypeptide is Probable cytochrome P450 6a23 (Cyp6a23) (Drosophila melanogaster (Fruit fly)).